A 226-amino-acid polypeptide reads, in one-letter code: MLTYETWEENETKGALSVLSWAYKEYKSEIVYACSFGVEGMVLLDLINQVNPSAKVVFLDTNVHFQETYELIQKVRERFPSLNIIEKQPKLTLDEQDKLHGDKLWESNPNLCCKIRKILPLEESLANEKAWISGLRREQSETRKHTKFINQDHRFQSIKVCPLIHWTWKEVWRYVYKHSLPYNSLHDIGYPSIGCEKCTLPVGEGGDSRDGRWAGKVKTECGLHYQ.

[4Fe-4S] cluster contacts are provided by Cys-112, Cys-113, Cys-195, and Cys-198. Cys-221 (nucleophile; cysteine thiosulfonate intermediate) is an active-site residue.

This sequence belongs to the PAPS reductase family. CysH subfamily. The cofactor is [4Fe-4S] cluster.

The protein localises to the cytoplasm. The catalysed reaction is [thioredoxin]-disulfide + sulfite + AMP + 2 H(+) = adenosine 5'-phosphosulfate + [thioredoxin]-dithiol. It participates in sulfur metabolism; hydrogen sulfide biosynthesis; sulfite from sulfate. In terms of biological role, catalyzes the formation of sulfite from adenosine 5'-phosphosulfate (APS) using thioredoxin as an electron donor. The chain is Adenosine 5'-phosphosulfate reductase from Bacillus anthracis (strain A0248).